A 387-amino-acid polypeptide reads, in one-letter code: Putative transmembrane protein At3g54730 (387 aa).

A compositionally biased stretch (pro residues) spans 10-25 (PAPPLLLPSPNPPPCA). A disordered region spans residues 10–45 (PAPPLLLPSPNPPPCALPQDLTSLVSPSEPPDPPDP). A run of 8 helical transmembrane segments spans residues 97–117 (VFPL…HPLV), 128–148 (GSNF…ILQF), 154–174 (VMIS…MILL), 186–206 (VLFS…VGLI), 221–241 (IQKL…FLEI), 292–312 (SWCF…YPLE), 335–355 (FSTI…FIFF), and 362–382 (PFVA…LNHF).

It localises to the membrane. This is Putative transmembrane protein At3g54730 from Arabidopsis thaliana (Mouse-ear cress).